A 143-amino-acid chain; its full sequence is Transcriptional regulator SlyA (143 aa).

One can recognise an HTH marR-type domain in the interval 2–135 (ESTLGSDLAR…LSTLVQKLEQ (134 aa)). The H-T-H motif DNA-binding region spans 49–72 (QIQLAKAIGIEQPSLVRTLDQLEE).

It belongs to the SlyA family. As to quaternary structure, homodimer.

Transcription regulator that can specifically activate or repress expression of target genes. Regulates the cpm operon, which contains cpmA, cpmB, cpmC, cpmD, cpmE, cpmF, cpmG and cpmH, involved in carbapenem-like antibiotic production. In Photorhabdus laumondii subsp. laumondii (strain DSM 15139 / CIP 105565 / TT01) (Photorhabdus luminescens subsp. laumondii), this protein is Transcriptional regulator SlyA.